Here is a 102-residue protein sequence, read N- to C-terminus: Small ribosomal subunit protein uS10 (102 aa).

Belongs to the universal ribosomal protein uS10 family. Part of the 30S ribosomal subunit.

Involved in the binding of tRNA to the ribosomes. In Bifidobacterium longum (strain DJO10A), this protein is Small ribosomal subunit protein uS10.